The following is a 1396-amino-acid chain: Integrin alpha-PS2 (1396 aa).

The N-terminal stretch at 1–31 (MSGDSIHRRRMALHCPITSLILLLIAMSAHG) is a signal peptide. Residues 32-1341 (YNIDLPSYVR…EPEPLQVPDV (1310 aa)) lie on the Extracellular side of the membrane. 7 FG-GAP repeats span residues 36–106 (LPSY…DCKL), 117–174 (NVDK…FTSH), 186–239 (RTNN…FPFK), 266–317 (STSE…RWNM), 318–383 (ANIF…TEEK), 386–445 (TTEH…GPLA), and 452–514 (KSEQ…FASN). Residue asparagine 69 is glycosylated (N-linked (GlcNAc...) asparagine). Residue asparagine 209 is glycosylated (N-linked (GlcNAc...) asparagine). N-linked (GlcNAc...) asparagine glycosylation is present at asparagine 322. N-linked (GlcNAc...) asparagine glycans are attached at residues asparagine 584, asparagine 598, asparagine 741, asparagine 783, asparagine 833, and asparagine 959. Disordered regions lie at residues 960 to 1107 (STDA…LGTL) and 1159 to 1246 (PGFQ…KPLQ). The span at 963-979 (AGDKLSPKQVEQRRQED) shows a compositional bias: basic and acidic residues. The span at 997 to 1006 (QAVQEPQVNQ) shows a compositional bias: polar residues. Asparagine 1005 carries N-linked (GlcNAc...) asparagine glycosylation. Low complexity-rich tracts occupy residues 1007-1021 (TSFT…SSGS) and 1060-1071 (QQQQQHQQLLLA). A compositionally biased stretch (polar residues) spans 1082-1099 (VTFNDKSQFGGRNNNFHT). 2 stretches are compositionally biased toward low complexity: residues 1162–1182 (QGQT…GYQT) and 1217–1226 (SSSSSSSSSS). Residues asparagine 1299 and asparagine 1307 are each glycosylated (N-linked (GlcNAc...) asparagine). A helical transmembrane segment spans residues 1342 to 1366 (VPLWVVVLAACAGALIFLLLVWLLY). At 1367 to 1396 (KCGFFNRNRPTDHSQERQPLRNGYHGDEHL) the chain is on the cytoplasmic side. The interval 1377-1396 (TDHSQERQPLRNGYHGDEHL) is disordered.

The protein belongs to the integrin alpha chain family. Heterodimer of an alpha and a beta subunit. The alpha subunit is composed of a heavy and a light chain linked by a disulfide bond. Alpha-PS2 associates with beta-PS. In terms of processing, the heavy-light chain cleavage site is either in 1230-1231, or 1233-1234, or 1243-1244. As to expression, in ovaries, highly expressed in follicle cells. At syncytial blastoderm stage, expressed in the embryonic mesodermal precursors but not in the ectoderm. At embryonic stages 7 and 10, expression is restricted to the mesoderm. At stage 12, expressed in the gonadal sheath and the interstitial cells of the gonad. In stage 16 embryos, expressed in the somatic and visceral muscles where localizes to sites of attachment between adjacent muscles. In third larval instar wing imaginal disk, expressed in the ventral compartment and in a subset of adepithelial and peripodial cells (at protein level).

It is found in the apical cell membrane. The protein localises to the lateral cell membrane. The protein resides in the basal cell membrane. Functionally, alpha-PS2/beta-PS is a receptor for Tig, wb and Ten-m. Involved in the function and/or development of the olfactory system. The chain is Integrin alpha-PS2 (if) from Drosophila melanogaster (Fruit fly).